A 340-amino-acid polypeptide reads, in one-letter code: HTH-type transcriptional repressor PurR (340 aa).

In terms of domain architecture, HTH lacI-type spans 2–56; sequence ATIKDVAKLVGVSTTTVSHVINKTRFVAEDTTKAVWEAIASLNYSPSAVARSLKV. Positions 4–23 form a DNA-binding region, H-T-H motif; the sequence is IKDVAKLVGVSTTTVSHVIN. The DNA-binding element occupies 48-56; that stretch reads SAVARSLKV. Y73, K188, T190, F219, and D273 together coordinate hypoxanthine.

As to quaternary structure, homodimer.

It functions in the pathway purine metabolism; purine nucleotide biosynthesis [regulation]. Its function is as follows. Is the main repressor of the genes involved in the de novo synthesis of purine nucleotides, regulating purB, purC, purEK, purF, purHD, purL, purMN and guaBA expression. PurR is allosterically activated to bind its cognate DNA by binding the purine corepressors, hypoxanthine or guanine, thereby effecting transcription repression. The polypeptide is HTH-type transcriptional repressor PurR (Glaesserella parasuis serovar 5 (strain SH0165) (Haemophilus parasuis)).